A 305-amino-acid chain; its full sequence is MIKQRTLKRIVQATGVGLHTGKKVTLTLRPAPANTGVIYRRTDLNPPVDFPADAKSVRDTMLCTCLVNEHDVRISTVEHLNAALAGLGIDNIVIEVNAPEIPIMDGSAAPFVYLLLDAGIDALNCAKKFVRIKETVRVEDGDKWAEFRPYNGFTLDFTIDFNHPAIDSSSQRYAMNFSADAFMRQISRARTFGFMRDIEYLQSRGLCLGGSFDCAIVVDDYRVLNEDGLRFEDEFVRHKMLDAIGDLFMCGHNIIGAFTAYKSGHALNNKLLQAVLAKQEAWEFVTFQDDAELPLAFKAPSTVLA.

Residues His-79, His-238, and Asp-242 each coordinate Zn(2+). The Proton donor role is filled by His-265.

Belongs to the LpxC family. Zn(2+) serves as cofactor.

It catalyses the reaction a UDP-3-O-[(3R)-3-hydroxyacyl]-N-acetyl-alpha-D-glucosamine + H2O = a UDP-3-O-[(3R)-3-hydroxyacyl]-alpha-D-glucosamine + acetate. It functions in the pathway glycolipid biosynthesis; lipid IV(A) biosynthesis; lipid IV(A) from (3R)-3-hydroxytetradecanoyl-[acyl-carrier-protein] and UDP-N-acetyl-alpha-D-glucosamine: step 2/6. In terms of biological role, catalyzes the hydrolysis of UDP-3-O-myristoyl-N-acetylglucosamine to form UDP-3-O-myristoylglucosamine and acetate, the committed step in lipid A biosynthesis. This is UDP-3-O-acyl-N-acetylglucosamine deacetylase from Salmonella typhi.